The following is a 502-amino-acid chain: ATP synthase subunit alpha (502 aa).

Positions 119-139 (GPIATTKSRPIESPAPGVMDR) are disordered. 169–176 (GDRQTGKT) is a binding site for ATP.

Belongs to the ATPase alpha/beta chains family. As to quaternary structure, F-type ATPases have 2 components, CF(1) - the catalytic core - and CF(0) - the membrane proton channel. CF(1) has five subunits: alpha(3), beta(3), gamma(1), delta(1), epsilon(1). CF(0) has three main subunits: a(1), b(2) and c(9-12). The alpha and beta chains form an alternating ring which encloses part of the gamma chain. CF(1) is attached to CF(0) by a central stalk formed by the gamma and epsilon chains, while a peripheral stalk is formed by the delta and b chains.

The protein localises to the cell membrane. It carries out the reaction ATP + H2O + 4 H(+)(in) = ADP + phosphate + 5 H(+)(out). Functionally, produces ATP from ADP in the presence of a proton gradient across the membrane. The alpha chain is a regulatory subunit. The polypeptide is ATP synthase subunit alpha (Alkalihalophilus pseudofirmus (strain ATCC BAA-2126 / JCM 17055 / OF4) (Bacillus pseudofirmus)).